Reading from the N-terminus, the 140-residue chain is MAAAAAGPGAPLSADELLPKGDAEKPEEELEEEDDEELDETLSERLWGLTEMFPERVRSAAGATFDLSLFVAQKMYRFSRAALWIGTTSFMILVLPVVFETEKLQMEQQQQLQQRQILLGPNTGLSGGMPGALPSLPGKI.

Over residues 1–11 the composition is skewed to low complexity; it reads MAAAAAGPGAP. The tract at residues 1-40 is disordered; the sequence is MAAAAAGPGAPLSADELLPKGDAEKPEEELEEEDDEELDE. At 1 to 81 the chain is on the cytoplasmic side; the sequence is MAAAAAGPGA…AQKMYRFSRA (81 aa). Serine 13 carries the phosphoserine modification. The segment covering 25-40 has biased composition (acidic residues); that stretch reads KPEEELEEEDDEELDE. The interval 39–48 is import sequence; necessary for mitochondrion outer membrane localization and integration in the TOM complex; that stretch reads DETLSERLWG. Threonine 41 is modified (phosphothreonine). Phosphoserine is present on serine 43. Residues 81 to 101 form a TMD; necessary for mitochondrion outer membrane localization and integration in the TOM complex region; sequence AALWIGTTSFMILVLPVVFET. A helical membrane pass occupies residues 82–101; sequence ALWIGTTSFMILVLPVVFET. The Mitochondrial intermembrane segment spans residues 102–140; sequence EKLQMEQQQQLQQRQILLGPNTGLSGGMPGALPSLPGKI. The C-tail signal; necessary for mitochondrion outer membrane localization and integration in the TOM complex stretch occupies residues 121-140; that stretch reads PNTGLSGGMPGALPSLPGKI.

The protein belongs to the Tom22 family. Forms part of the preprotein translocase complex of the outer mitochondrial membrane (TOM complex) which consists of at least 7 different proteins (TOMM5, TOMM6, TOMM7, TOMM20, TOMM22, TOMM40 and TOMM70). Interacts with PPP2R2B and TOMM40.

It localises to the mitochondrion outer membrane. In terms of biological role, central receptor component of the translocase of the outer membrane of mitochondria (TOM complex) responsible for the recognition and translocation of cytosolically synthesized mitochondrial preproteins. Together with the peripheral receptor TOM20 functions as the transit peptide receptor and facilitates the movement of preproteins into the translocation pore. Required for the translocation across the mitochondrial outer membrane of cytochrome P450 monooxygenases. The chain is Mitochondrial import receptor subunit TOM22 homolog (TOMM22) from Bos taurus (Bovine).